A 344-amino-acid chain; its full sequence is Fructose-1,6-bisphosphatase class 1 (344 aa).

Mg(2+) is bound by residues Glu92, Asp115, Leu117, and Asp118. Substrate-binding positions include 118–121, Asn211, Tyr244, and Lys274; that span reads DGSS. Glu280 is a Mg(2+) binding site.

The protein belongs to the FBPase class 1 family. In terms of assembly, homotetramer. Mg(2+) serves as cofactor.

It is found in the cytoplasm. It carries out the reaction beta-D-fructose 1,6-bisphosphate + H2O = beta-D-fructose 6-phosphate + phosphate. The protein operates within carbohydrate biosynthesis; gluconeogenesis. This is Fructose-1,6-bisphosphatase class 1 from Aeromonas hydrophila subsp. hydrophila (strain ATCC 7966 / DSM 30187 / BCRC 13018 / CCUG 14551 / JCM 1027 / KCTC 2358 / NCIMB 9240 / NCTC 8049).